Here is a 458-residue protein sequence, read N- to C-terminus: N-acetylgalactosamine kinase (458 aa).

Alpha-D-galactose is bound by residues Arg-43, Glu-49, His-50, and Asp-52. ATP-binding residues include Gly-143, Ser-145, and Ser-146. Alpha-D-galactose is bound at residue Asp-190. The Proton acceptor role is filled by Asp-190. ATP contacts are provided by Asn-233 and Lys-234.

This sequence belongs to the GHMP kinase family. GalK subfamily. In terms of assembly, monomer.

It catalyses the reaction N-acetyl-alpha-D-galactosamine + ATP = N-acetyl-alpha-D-galactosamine 1-phosphate + ADP + H(+). Functionally, acts on GalNAc. Also acts as a galactokinase when galactose is present at high concentrations. The polypeptide is N-acetylgalactosamine kinase (Galk2) (Mus musculus (Mouse)).